The following is a 321-amino-acid chain: ATP-dependent 6-phosphofructokinase (321 aa).

G12 is an ATP binding site. ADP is bound by residues 22–26 (RGVVR) and 55–60 (RYSVSD). Residues 73 to 74 (RF) and 103 to 106 (GDGS) contribute to the ATP site. D104 lines the Mg(2+) pocket. A substrate-binding site is contributed by 127-129 (TID). Catalysis depends on D129, which acts as the Proton acceptor. Residue R156 participates in ADP binding. Substrate-binding positions include R164 and 171 to 173 (MGR). Residues 187–189 (GCE), R213, and 215–217 (KRH) each bind ADP. Substrate contacts are provided by residues E224, R245, and 251–254 (HIQR).

Belongs to the phosphofructokinase type A (PFKA) family. ATP-dependent PFK group I subfamily. Prokaryotic clade 'B1' sub-subfamily. In terms of assembly, homotetramer. Mg(2+) is required as a cofactor.

It localises to the cytoplasm. It catalyses the reaction beta-D-fructose 6-phosphate + ATP = beta-D-fructose 1,6-bisphosphate + ADP + H(+). It participates in carbohydrate degradation; glycolysis; D-glyceraldehyde 3-phosphate and glycerone phosphate from D-glucose: step 3/4. Allosterically activated by ADP and other diphosphonucleosides, and allosterically inhibited by phosphoenolpyruvate. Its function is as follows. Catalyzes the phosphorylation of D-fructose 6-phosphate to fructose 1,6-bisphosphate by ATP, the first committing step of glycolysis. The sequence is that of ATP-dependent 6-phosphofructokinase from Haemophilus influenzae (strain PittEE).